Consider the following 62-residue polypeptide: Short neurotoxin 1 (62 aa).

Over residues 1-17 (MQCCNQQSSQPKTTTTC) the composition is skewed to polar residues. The tract at residues 1–20 (MQCCNQQSSQPKTTTTCPGG) is disordered. 4 disulfide bridges follow: cysteine 3/cysteine 24, cysteine 17/cysteine 41, cysteine 43/cysteine 54, and cysteine 55/cysteine 60.

The protein belongs to the three-finger toxin family. Short-chain subfamily. Type I alpha-neurotoxin sub-subfamily. Expressed by the venom gland.

It is found in the secreted. Its function is as follows. Binds to muscle nicotinic acetylcholine receptor (nAChR) and inhibit acetylcholine from binding to the receptor, thereby impairing neuromuscular transmission. The sequence is that of Short neurotoxin 1 from Acanthophis antarcticus (Common death adder).